Reading from the N-terminus, the 2036-residue chain is Bikaverin polyketide synthase bik1 (2036 aa).

Residues 8 to 242 (YVFGDQSTPV…YPAPIYGPYH (235 aa)) form an N-terminal acylcarrier protein transacylase domain (SAT) region. A Ketosynthase family 3 (KS3) domain is found at 370–801 (ENKIAIIGFS…GGNTSLLLED (432 aa)). Residues C541, H676, and H718 each act as for beta-ketoacyl synthase activity in the active site. An acyl/malonyl transferases region spans residues 908-1209 (FLFTGQGAQE…LASLRRKEDH (302 aa)). S997 serves as the catalytic For acyl/malonyl transferase activity. An N-terminal hotdog fold region spans residues 1293–1425 (HNVIEQVHGD…CDVAVENPSS (133 aa)). A PKS/mFAS DH domain is found at 1293–1600 (HNVIEQVHGD…FKKVARKVLE (308 aa)). Residues 1295–1599 (VIEQVHGDKR…TFKKVARKVL (305 aa)) form a product template (PT) domain region. H1325 functions as the Proton acceptor; for dehydratase activity in the catalytic mechanism. Residues 1452 to 1600 (SAHMMRRGLL…FKKVARKVLE (149 aa)) are C-terminal hotdog fold. The Proton donor; for dehydratase activity role is filled by D1511. Residues 1628-1654 (VLTPPSTTSHSVGTTSPPEPTESPVGS) are disordered. The span at 1638 to 1654 (SVGTTSPPEPTESPVGS) shows a compositional bias: low complexity. A Carrier domain is found at 1653 to 1730 (GSASGLIQKA…DLKSFLGAND (78 aa)). S1690 carries the O-(pantetheine 4'-phosphoryl)serine modification. Residues 1733–1758 (FSSSNSEAESSASSAASTSPSDHGDD) are disordered. A compositionally biased stretch (low complexity) spans 1734–1753 (SSSNSEAESSASSAASTSPS). S1857 functions as the For thioesterase activity in the catalytic mechanism.

It functions in the pathway secondary metabolite biosynthesis. In terms of biological role, polyketide synthase; part of the gene cluster that mediates the biosynthesis of bikaverin, a red pigment also considered as a mycotoxin. The first stage is catalyzed by the polyketide synthase bik1, which catalyzes the formation of the intermediate SMA76a also knowm as pre-bikaverin. FAD-dependent monooxygenase bik2 might then be responsible for the oxidation of pre-bikaverin to oxo-pre-bikaverin which is in turn methylated by the O-methyltransferase bik3 to me-oxo-pre-bikaverin. A further cycle of oxydation and methylation by bik2 and bik3 leads to the final product of bikaverin, via a nor-bikaverin intermediate. This Gibberella fujikuroi (strain CBS 195.34 / IMI 58289 / NRRL A-6831) (Bakanae and foot rot disease fungus) protein is Bikaverin polyketide synthase bik1.